The sequence spans 287 residues: Protease HtpX (287 aa).

2 helical membrane passes run 4–24 (IFLLIATNLAVLLVASIVMSI) and 33–53 (GGLLVFAAIFGFGGAFISLAI). Histidine 139 is a binding site for Zn(2+). Glutamate 140 is an active-site residue. Position 143 (histidine 143) interacts with Zn(2+). 2 consecutive transmembrane segments (helical) span residues 154 to 174 (LIQGVVNTFVIFAARVVAGII) and 195 to 215 (AVVFVLDMLFGILASIIVAYF). Glutamate 220 contributes to the Zn(2+) binding site.

This sequence belongs to the peptidase M48B family. Zn(2+) is required as a cofactor.

It is found in the cell inner membrane. In Shewanella baltica (strain OS223), this protein is Protease HtpX.